A 784-amino-acid polypeptide reads, in one-letter code: DNA repair and recombination protein RAD54-like (784 aa).

Positions 2-9 are required for chromatin remodeling, strand pairing activities and coupling of ATPase activity; that stretch reads RRSLAPSQ. T22 carries the phosphothreonine modification. Residues 169-344 enclose the Helicase ATP-binding domain; the sequence is EGKKGNFNGC…FSLVNFVNPE (176 aa). Residue 182-189 coordinates ATP; that stretch reads DEMGLGKT. The DEGH box signature appears at 295–298; it reads DEGH. The region spanning 501–658 is the Helicase C-terminal domain; it reads LLDFMLATIR…NNESAEKHFT (158 aa). The disordered stretch occupies residues 742–784; that stretch reads QAIKESEETKQEAEDTSIPAKSKRKRSTTPESDDCNDEDFKGF. Residues 745 to 754 show a composition bias toward basic and acidic residues; the sequence is KESEETKQEA.

This sequence belongs to the SNF2/RAD54 helicase family. In terms of assembly, interacts (via N-terminus) with spn-A/Rad51.

The protein localises to the nucleus. Functionally, involved in mitotic DNA repair and meiotic recombination. Functions in the recombinational DNA repair pathway. Essential for interhomolog gene conversion (GC), but may have a less important role in intersister GC than spn-A/Rad51. In the presence of DNA, spn-A/Rad51 enhances the ATPase activity of okr/Rad54. This Drosophila willistoni (Fruit fly) protein is DNA repair and recombination protein RAD54-like.